We begin with the raw amino-acid sequence, 129 residues long: MAGTLFIILRFVDTTLPSSRVYCVRSLEVSVAVELAAATVLAFESIGVVDDCGRSVLFSIILIAAFICSVFLIASEDIAGSRRSTGSCVTLWEGRNISFCLYRSNWLNTVPVGYMFFLRKNRSLDERYF.

Residues 1–28 (MAGTLFIILRFVDTTLPSSRVYCVRSLE) lie on the Cytoplasmic side of the membrane. Residues 29-49 (VSVAVELAAATVLAFESIGVV) form a helical membrane-spanning segment. The Extracellular segment spans residues 50–54 (DDCGR). A helical membrane pass occupies residues 55-75 (SVLFSIILIAAFICSVFLIAS). The Cytoplasmic portion of the chain corresponds to 76 to 129 (EDIAGSRRSTGSCVTLWEGRNISFCLYRSNWLNTVPVGYMFFLRKNRSLDERYF).

The protein localises to the membrane. This is an uncharacterized protein from Saccharomyces cerevisiae (strain ATCC 204508 / S288c) (Baker's yeast).